Reading from the N-terminus, the 203-residue chain is Dephospho-CoA kinase (203 aa).

The DPCK domain occupies 4-203; that stretch reads VIGITGGIAT…EEGYIQSESE (200 aa). Residue 12–17 coordinates ATP; the sequence is ATGKST.

Belongs to the CoaE family.

Its subcellular location is the cytoplasm. It catalyses the reaction 3'-dephospho-CoA + ATP = ADP + CoA + H(+). The protein operates within cofactor biosynthesis; coenzyme A biosynthesis; CoA from (R)-pantothenate: step 5/5. In terms of biological role, catalyzes the phosphorylation of the 3'-hydroxyl group of dephosphocoenzyme A to form coenzyme A. This chain is Dephospho-CoA kinase, found in Staphylococcus epidermidis (strain ATCC 35984 / DSM 28319 / BCRC 17069 / CCUG 31568 / BM 3577 / RP62A).